A 1507-amino-acid chain; its full sequence is MVSLIDTIEAAAEKQKQSQAVVTNTSASSSSCSSSFSSSPPSSSVGSPSPGAPKTNLTASGKPKEKRRNNEKRKEKSRDAARCRRSKETEIFMELSAALPLKTDDVNQLDKASVMRITIAFLKIREMLQFVPSLRDCNDDIKQDIETAEDQQEVKPKLEVGTEDWLNGAEARELLKQTMDGFLLVLSHEGDITYVSENVVEYLGITKIDTLGQQIWEYSHQCDHAEIKEALSLKRELAQKVKDEPQQNSGVSTHHRDLFVRLKCTLTSRGRSINIKSASYKVIHITGHLVVNAKGERLLMAIGRPIPHPSNIEIPLGTSTFLTKHSLDMRFTYVDDKMHDLLGYSPKDLLDTSLFSCQHGADSERLMATFKSVLSKGQGETSRYRFLGKYGGYCWILSQATIVYDKLKPQSVVCVNYVISNLENKHEIYSLAQQTAASEQKEQHHQAAETEKEPEKAADPEIIAQETKETVNTPIHTSELQAKPLQLESEKAEKTIEETKTIATIPPVTATSTADQIKQLPESNPYKQILQAELLIKRENHSPGPRTITAQLLSGSSSGLRPEEKRPKSVTASVLRPSPAPPLTPPPTAVLCKKTPLGVEPNLPPTTTATAAIISSSNQQLQIAQQTQLQNPQQPAQDMSKGFCSLFADDGRGLTMLKEEPDDLSHHLASTNCIQLDEMTPFSDMLVGLMGTCLLPEDINSLDSTTCSTTASGQHYQSPSSSSTSAPSNTSSSNNSYANSPLSPLTPNSTATASNPSHQQQQQHHNQQQQQQQQQQHHPQHHDNSNSSSNIDPLFNYREESNDTSCSQHLHSPSITSKSPEDSSLPSLCSPNSLTQEDDFSFEAFAMRAPYIPIDDDMPLLTETDLMWCPPEDLQTMVPKEIDAIQQQLQQLQQQHHQQYAGNTGYQQQQQQPQLQQQHFSNSLCSSPASTVSSLSPSPVQQHHQQQQAAVFTSDSSELAALLCGSGNGTLSILAGSGVTVAEECNERLQQHQQQQQQTSGNEFRTFQQLQQELQLQEEQQQRQQQQQQQQQQQQQQQLLSLNIECKKEKYDVQMGGSLCHPMEDAFENDYSKDSANLDCWDLIQMQVVDTEPVSPNAASPTPCKVSAIQLLQQQQQLQQQQQQQQNIILNAVPLITIQNNKELMQQQQQQQQQQQQEQLQQPAIKLLNGASIAPVNTKATIRLVESKPPTTTQSRMAKVNLVPQQQQHGNKRHLNSATGAGNPVESKRLKSGTLCLDVQSPQLLQQLIGKDPAQQQTQAAKRAGSERWQLSAESKQQKQQQQQSNSVLKNLLVSGRDDDDSEAMIIDEDNSLVQPIPLGKYGLPLHCHTSTSSVLRDYHNNPLISGTNFQLSPVFGGSDSSGGDGETGSVVSLDDSVPPGLTACDTDASSDSGIDENSLMDGASGSPRKRLSSTSNSTNQAESAPPALDVETPVTQKSVEEEFEGGGSGSNAPSRKTSISFLDSSNPLLHTPAMMDLVNDDYIMGEGGFEFSDNQLEQVLGWPEIA.

Residues 1–85 (MVSLIDTIEA…KSRDAARCRR (85 aa)) form a disordered region. A compositionally biased stretch (low complexity) spans 26-49 (SASSSSCSSSFSSSPPSSSVGSPS). Over residues 72–85 (KRKEKSRDAARCRR) the composition is skewed to basic and acidic residues. The bHLH domain maps to 72–125 (KRKEKSRDAARCRRSKETEIFMELSAALPLKTDDVNQLDKASVMRITIAFLKIR). 2 consecutive PAS domains span residues 167–240 (NGAE…LAQK) and 307–377 (PHPS…LSKG). One can recognise a PAC domain in the interval 381–422 (TSRYRFLGKYGGYCWILSQATIVYDKLKPQSVVCVNYVISNL). Disordered regions lie at residues 433-459 (QQTAASEQKEQHHQAAETEKEPEKAAD), 541-588 (HSPG…PPPT), 706-832 (TCST…CSPN), and 900-951 (YAGN…QAAV). Over residues 439–459 (EQKEQHHQAAETEKEPEKAAD) the composition is skewed to basic and acidic residues. Over residues 548-559 (ITAQLLSGSSSG) the composition is skewed to polar residues. Residues 578–588 (SPAPPLTPPPT) show a composition bias toward pro residues. The tract at residues 692-863 (TCLLPEDINS…IDDDMPLLTE (172 aa)) is ODD. Over residues 706–717 (TCSTTASGQHYQ) the composition is skewed to polar residues. Low complexity-rich tracts occupy residues 718–745 (SPSSSSTSAPSNTSSSNNSYANSPLSPL) and 754–777 (SNPSHQQQQQHHNQQQQQQQQQQH). Polar residues predominate over residues 803 to 818 (DTSCSQHLHSPSITSK). Composition is skewed to low complexity over residues 823-832 (SSLPSLCSPN), 907-918 (QQQQQQPQLQQQ), and 926-951 (SSPASTVSSLSPSPVQQHHQQQQAAV). Residues 880-908 (KEIDAIQQQLQQLQQQHHQQYAGNTGYQQ) are a coiled coil. Coiled-coil stretches lie at residues 982–1054 (AEEC…YDVQ) and 1110–1162 (QLLQ…QLQQ). 3 disordered regions span residues 1204-1228 (PQQQQHGNKRHLNSATGAGNPVESK), 1251-1287 (KDPAQQQTQAAKRAGSERWQLSAESKQQKQQQQQSNS), and 1356-1460 (FGGS…KTSI). Over residues 1413-1423 (SSTSNSTNQAE) the composition is skewed to polar residues.

Efficient DNA binding requires dimerization with another bHLH protein. Interacts with Vhl. In terms of tissue distribution, ubiquitously expressed in the embryo.

It is found in the cytoplasm. The protein resides in the nucleus. In terms of biological role, functions as a transcriptional regulator of the adaptive response to hypoxia. Binds to core DNA sequence 5'-[AG]CGTG-3' within the hypoxia response element (HRE) of target gene promoters. This chain is Protein similar (sima), found in Drosophila melanogaster (Fruit fly).